A 2144-amino-acid polypeptide reads, in one-letter code: Alpha-protein kinase 2 (2144 aa).

The 99-residue stretch at 7–105 folds into the Ig-like 1 domain; it reads PERRTLCFLS…ICCSASLEVQ (99 aa). The cysteines at positions 33 and 98 are disulfide-linked. Disordered regions lie at residues 425–473, 500–575, 727–775, 845–864, 881–907, 1011–1065, 1316–1340, 1471–1509, 1565–1587, 1629–1696, and 1720–1754; these read ETAK…LQTM, SLAR…GAPG, EDNE…NVGS, QTQGSEPPRSTDKRSQDGKS, EASEDAVGETAADVENPPSTFSSTLPY, SCEA…PEGQ, DPVEDKELEVTDSPSEVSKTGEMEM, GPGEEGQGIPSVCSMSQTQDGGDRSLGEAGQRGTDETEV, CGNHVRSSDDLTNTPCTSSPKGN, ECES…GSGH, and ENSRKNSIVKKTPKFERSLSRTDEKRDPKRAPCKA. Over residues 500–511 the composition is skewed to basic and acidic residues; it reads SLARERTDEKYP. The span at 853-864 shows a compositional bias: basic and acidic residues; sequence RSTDKRSQDGKS. The segment covering 897 to 906 has biased composition (polar residues); it reads PPSTFSSTLP. The segment covering 1574–1587 has biased composition (polar residues); it reads DLTNTPCTSSPKGN. Composition is skewed to basic and acidic residues over residues 1631 to 1645 and 1732 to 1754; these read ESEKDPKSLLRRDPC and PKFERSLSRTDEKRDPKRAPCKA. The 89-residue stretch at 1759-1847 folds into the Ig-like 2 domain; it reads PVLLKRIQAE…GKVTAEFNLT (89 aa). A disulfide bridge links Cys-1781 with Cys-1831. In terms of domain architecture, Alpha-type protein kinase spans 1874-2106; that stretch reads KEDVFNDSYF…YCKMLGLKSL (233 aa). The disordered stretch occupies residues 2109-2144; that stretch reads NSQKPKKPIVGKGRVPTNATQVKTPESETPPAERKT.

It belongs to the protein kinase superfamily. Alpha-type protein kinase family. ALPK subfamily.

The protein localises to the basolateral cell membrane. It carries out the reaction L-seryl-[protein] + ATP = O-phospho-L-seryl-[protein] + ADP + H(+). It catalyses the reaction L-threonyl-[protein] + ATP = O-phospho-L-threonyl-[protein] + ADP + H(+). Protein kinase that recognizes phosphorylation sites in which the surrounding peptides have an alpha-helical conformation. Regulates cardiac development and cardiomyocyte differentiation by negatively regulating Wnt/beta-catenin signaling. The protein is Alpha-protein kinase 2 of Mus musculus (Mouse).